A 177-amino-acid polypeptide reads, in one-letter code: Peptidyl-prolyl cis-trans isomerase H (177 aa).

The residue at position 2 (alanine 2) is an N-acetylalanine. A PPIase cyclophilin-type domain is found at 14-176; the sequence is FFDVSIGGQE…LPVVISQCGE (163 aa).

The protein belongs to the cyclophilin-type PPIase family. PPIase H subfamily. As to quaternary structure, interacts directly with PRPF4. Part of a heteromeric complex containing PPIH, PRPF3 and PRPF4 that is stable in the absence of RNA. Component of the U4/U6-U5 tri-snRNP complex composed of the U4, U6 and U5 snRNAs and at least PRPF3, PRPF4, PRPF6, PRPF8, PRPF31, SNRNP200, TXNL4A, SNRNP40, DDX23, CD2BP2, PPIH, SNU13, EFTUD2, SART1 and USP39. Heterodimer with PRPF18.

It localises to the nucleus speckle. The protein resides in the cytoplasm. It carries out the reaction [protein]-peptidylproline (omega=180) = [protein]-peptidylproline (omega=0). Inhibited by cyclosporin A. Functionally, PPIase that catalyzes the cis-trans isomerization of proline imidic peptide bonds in oligopeptides and may therefore assist protein folding. Participates in pre-mRNA splicing. May play a role in the assembly of the U4/U5/U6 tri-snRNP complex, one of the building blocks of the spliceosome. May act as a chaperone. This Homo sapiens (Human) protein is Peptidyl-prolyl cis-trans isomerase H (PPIH).